Consider the following 265-residue polypeptide: Tryptophan synthase alpha chain (265 aa).

Active-site proton acceptor residues include Glu49 and Asp60.

The protein belongs to the TrpA family. In terms of assembly, tetramer of two alpha and two beta chains.

The enzyme catalyses (1S,2R)-1-C-(indol-3-yl)glycerol 3-phosphate + L-serine = D-glyceraldehyde 3-phosphate + L-tryptophan + H2O. It participates in amino-acid biosynthesis; L-tryptophan biosynthesis; L-tryptophan from chorismate: step 5/5. Its function is as follows. The alpha subunit is responsible for the aldol cleavage of indoleglycerol phosphate to indole and glyceraldehyde 3-phosphate. The polypeptide is Tryptophan synthase alpha chain (Cupriavidus taiwanensis (strain DSM 17343 / BCRC 17206 / CCUG 44338 / CIP 107171 / LMG 19424 / R1) (Ralstonia taiwanensis (strain LMG 19424))).